Here is a 515-residue protein sequence, read N- to C-terminus: Chromosomal replication initiator protein DnaA (515 aa).

The segment at 1–89 (MVADQAVLSS…LLAISIDANL (89 aa)) is domain I, interacts with DnaA modulators. The tract at residues 89–172 (LQPPRTPSSE…APPSTSAETS (84 aa)) is domain II. 2 disordered regions span residues 90–130 (QPPR…SRRA) and 142–171 (PPAD…SAET). 2 stretches are compositionally biased toward low complexity: residues 102-114 (SSLA…AAAP) and 143-160 (PADV…NGKP). The tract at residues 173–389 (RLNDRYHFET…GALIRVTAFA (217 aa)) is domain III, AAA+ region. Residues Gly-217, Gly-219, Lys-220, and Thr-221 each contribute to the ATP site. Residues 390–515 (SLNRQTVDIE…NEIKRKQRGA (126 aa)) form a domain IV, binds dsDNA region.

It belongs to the DnaA family. In terms of assembly, oligomerizes as a right-handed, spiral filament on DNA at oriC.

The protein localises to the cytoplasm. Plays an essential role in the initiation and regulation of chromosomal replication. ATP-DnaA binds to the origin of replication (oriC) to initiate formation of the DNA replication initiation complex once per cell cycle. Binds the DnaA box (a 9 base pair repeat at the origin) and separates the double-stranded (ds)DNA. Forms a right-handed helical filament on oriC DNA; dsDNA binds to the exterior of the filament while single-stranded (ss)DNA is stabiized in the filament's interior. The ATP-DnaA-oriC complex binds and stabilizes one strand of the AT-rich DNA unwinding element (DUE), permitting loading of DNA polymerase. After initiation quickly degrades to an ADP-DnaA complex that is not apt for DNA replication. Binds acidic phospholipids. The polypeptide is Chromosomal replication initiator protein DnaA (Micrococcus luteus (strain ATCC 4698 / DSM 20030 / JCM 1464 / CCM 169 / CCUG 5858 / IAM 1056 / NBRC 3333 / NCIMB 9278 / NCTC 2665 / VKM Ac-2230) (Micrococcus lysodeikticus)).